Here is a 119-residue protein sequence, read N- to C-terminus: Large ribosomal subunit protein bL20 (119 aa).

This sequence belongs to the bacterial ribosomal protein bL20 family.

Binds directly to 23S ribosomal RNA and is necessary for the in vitro assembly process of the 50S ribosomal subunit. It is not involved in the protein synthesizing functions of that subunit. The sequence is that of Large ribosomal subunit protein bL20 from Clostridium tetani (strain Massachusetts / E88).